Consider the following 557-residue polypeptide: Formate--tetrahydrofolate ligase (557 aa).

66–73 is a binding site for ATP; sequence TPAGEGKS.

The protein belongs to the formate--tetrahydrofolate ligase family.

The enzyme catalyses (6S)-5,6,7,8-tetrahydrofolate + formate + ATP = (6R)-10-formyltetrahydrofolate + ADP + phosphate. Its pathway is one-carbon metabolism; tetrahydrofolate interconversion. The sequence is that of Formate--tetrahydrofolate ligase from Clostridium botulinum (strain Okra / Type B1).